A 156-amino-acid chain; its full sequence is SsrA-binding protein (156 aa).

It belongs to the SmpB family.

The protein localises to the cytoplasm. Required for rescue of stalled ribosomes mediated by trans-translation. Binds to transfer-messenger RNA (tmRNA), required for stable association of tmRNA with ribosomes. tmRNA and SmpB together mimic tRNA shape, replacing the anticodon stem-loop with SmpB. tmRNA is encoded by the ssrA gene; the 2 termini fold to resemble tRNA(Ala) and it encodes a 'tag peptide', a short internal open reading frame. During trans-translation Ala-aminoacylated tmRNA acts like a tRNA, entering the A-site of stalled ribosomes, displacing the stalled mRNA. The ribosome then switches to translate the ORF on the tmRNA; the nascent peptide is terminated with the 'tag peptide' encoded by the tmRNA and targeted for degradation. The ribosome is freed to recommence translation, which seems to be the essential function of trans-translation. The protein is SsrA-binding protein of Bacillus pumilus (strain SAFR-032).